Consider the following 108-residue polypeptide: Nucleoid-associated protein Pmen_2646 (108 aa).

A disordered region spans residues 1-25 (MMKGGMAGLMKQAQQMQEKMQKMQE).

The protein belongs to the YbaB/EbfC family. In terms of assembly, homodimer.

The protein localises to the cytoplasm. It is found in the nucleoid. Its function is as follows. Binds to DNA and alters its conformation. May be involved in regulation of gene expression, nucleoid organization and DNA protection. In Ectopseudomonas mendocina (strain ymp) (Pseudomonas mendocina), this protein is Nucleoid-associated protein Pmen_2646.